The sequence spans 249 residues: Isoprenyl transferase (249 aa).

Aspartate 29 is an active-site residue. Aspartate 29 provides a ligand contact to Mg(2+). Residues 30 to 33 (GNGR), tryptophan 34, arginine 42, histidine 46, and 74 to 76 (STE) each bind substrate. The Proton acceptor role is filled by asparagine 77. Substrate is bound by residues tryptophan 78, arginine 80, arginine 197, and 203-205 (RLS). Residue glutamate 216 participates in Mg(2+) binding.

Belongs to the UPP synthase family. As to quaternary structure, homodimer. It depends on Mg(2+) as a cofactor.

In terms of biological role, catalyzes the condensation of isopentenyl diphosphate (IPP) with allylic pyrophosphates generating different type of terpenoids. The sequence is that of Isoprenyl transferase from Gloeobacter violaceus (strain ATCC 29082 / PCC 7421).